The primary structure comprises 335 residues: Glyceraldehyde-3-phosphate dehydrogenase (335 aa).

NAD(+)-binding positions include 13–14 and G111; that span reads TI. 140-142 contacts D-glyceraldehyde 3-phosphate; the sequence is SCN. The Nucleophile role is filled by C141. Position 169 (R169) interacts with NAD(+). D-glyceraldehyde 3-phosphate is bound at residue 195–196; it reads HG. Q300 lines the NAD(+) pocket.

This sequence belongs to the glyceraldehyde-3-phosphate dehydrogenase family. As to quaternary structure, homotetramer.

It is found in the cytoplasm. The enzyme catalyses D-glyceraldehyde 3-phosphate + phosphate + NADP(+) = (2R)-3-phospho-glyceroyl phosphate + NADPH + H(+). The catalysed reaction is D-glyceraldehyde 3-phosphate + phosphate + NAD(+) = (2R)-3-phospho-glyceroyl phosphate + NADH + H(+). The protein operates within carbohydrate degradation; glycolysis; pyruvate from D-glyceraldehyde 3-phosphate: step 1/5. The chain is Glyceraldehyde-3-phosphate dehydrogenase from Methanococcoides burtonii (strain DSM 6242 / NBRC 107633 / OCM 468 / ACE-M).